Reading from the N-terminus, the 273-residue chain is Putative phosphoenolpyruvate synthase regulatory protein (273 aa).

153–160 contacts ADP; that stretch reads AVSRAGKT.

It belongs to the pyruvate, phosphate/water dikinase regulatory protein family. PSRP subfamily.

It catalyses the reaction [pyruvate, water dikinase] + ADP = [pyruvate, water dikinase]-phosphate + AMP + H(+). It carries out the reaction [pyruvate, water dikinase]-phosphate + phosphate + H(+) = [pyruvate, water dikinase] + diphosphate. Functionally, bifunctional serine/threonine kinase and phosphorylase involved in the regulation of the phosphoenolpyruvate synthase (PEPS) by catalyzing its phosphorylation/dephosphorylation. The polypeptide is Putative phosphoenolpyruvate synthase regulatory protein (Xylella fastidiosa (strain M23)).